Reading from the N-terminus, the 205-residue chain is Pyridoxal 5'-phosphate synthase subunit PdxT (205 aa).

53–55 (GES) contributes to the L-glutamine binding site. Cys85 acts as the Nucleophile in catalysis. Residues Arg112 and 140 to 141 (IR) each bind L-glutamine. Catalysis depends on charge relay system residues His176 and Glu178.

It belongs to the glutaminase PdxT/SNO family. In the presence of PdxS, forms a dodecamer of heterodimers. Only shows activity in the heterodimer.

The enzyme catalyses aldehydo-D-ribose 5-phosphate + D-glyceraldehyde 3-phosphate + L-glutamine = pyridoxal 5'-phosphate + L-glutamate + phosphate + 3 H2O + H(+). The catalysed reaction is L-glutamine + H2O = L-glutamate + NH4(+). The protein operates within cofactor biosynthesis; pyridoxal 5'-phosphate biosynthesis. In terms of biological role, catalyzes the hydrolysis of glutamine to glutamate and ammonia as part of the biosynthesis of pyridoxal 5'-phosphate. The resulting ammonia molecule is channeled to the active site of PdxS. The protein is Pyridoxal 5'-phosphate synthase subunit PdxT of Haloquadratum walsbyi (strain DSM 16790 / HBSQ001).